The sequence spans 307 residues: Aspartate carbamoyltransferase catalytic subunit (307 aa).

Carbamoyl phosphate is bound by residues Arg55 and Thr56. Lys85 is a binding site for L-aspartate. Residues Arg106, His135, and Gln138 each contribute to the carbamoyl phosphate site. Residues Arg168 and Arg230 each coordinate L-aspartate. Leu268 and Pro269 together coordinate carbamoyl phosphate.

Belongs to the aspartate/ornithine carbamoyltransferase superfamily. ATCase family. In terms of assembly, heterododecamer (2C3:3R2) of six catalytic PyrB chains organized as two trimers (C3), and six regulatory PyrI chains organized as three dimers (R2).

It carries out the reaction carbamoyl phosphate + L-aspartate = N-carbamoyl-L-aspartate + phosphate + H(+). It functions in the pathway pyrimidine metabolism; UMP biosynthesis via de novo pathway; (S)-dihydroorotate from bicarbonate: step 2/3. Its function is as follows. Catalyzes the condensation of carbamoyl phosphate and aspartate to form carbamoyl aspartate and inorganic phosphate, the committed step in the de novo pyrimidine nucleotide biosynthesis pathway. This Photorhabdus laumondii subsp. laumondii (strain DSM 15139 / CIP 105565 / TT01) (Photorhabdus luminescens subsp. laumondii) protein is Aspartate carbamoyltransferase catalytic subunit.